We begin with the raw amino-acid sequence, 128 residues long: Small nuclear ribonucleoprotein SmD3a (128 aa).

The region spanning 7–79 (IPVKLLHESS…VRFLVIPDML (73 aa)) is the Sm domain. A disordered region spans residues 90–128 (GKGKSASLGVGRGRGAAMRAKGTGRGTGGGRGAVPPVRR). Gly residues predominate over residues 112 to 121 (TGRGTGGGRG).

It belongs to the snRNP core protein family. Expressed in young seedlings, roots, leaves, flowers and immature siliques.

It localises to the cytoplasm. The protein resides in the cytosol. The protein localises to the nucleus. Its function is as follows. Core component of the spliceosomal U1, U2, U4 and U5 small nuclear ribonucleoproteins (snRNPs), the building blocks of the spliceosome. May play a minor role in the splicing of cellular pre-mRNAs. This is Small nuclear ribonucleoprotein SmD3a from Arabidopsis thaliana (Mouse-ear cress).